Reading from the N-terminus, the 398-residue chain is Arylacetamide deacetylase (398 aa).

Topologically, residues 1 to 5 (MGRTI) are cytoplasmic. Residues 6 to 26 (FLLISVVLVAYYIYIPLPDDI) traverse the membrane as a helical; Signal-anchor for type II membrane protein segment. Residues 27–398 (EEPWKIILGN…QYLNWLHKNL (372 aa)) are Lumenal-facing. Asn-77 carries an N-linked (GlcNAc...) asparagine glycan. Residues 110–112 (HGG) carry the Involved in the stabilization of the negatively charged intermediate by the formation of the oxyanion hole motif. A disulfide bond links Cys-115 and Cys-339. Ser-188 is a catalytic residue. N-linked (GlcNAc...) asparagine glycosylation is found at Asn-192, Asn-281, and Asn-324. Catalysis depends on residues Asp-342 and His-372.

The protein belongs to the 'GDXG' lipolytic enzyme family. Highest levels in liver with lower levels in jejunum, kidney and testis.

It localises to the endoplasmic reticulum membrane. It is found in the microsome membrane. The catalysed reaction is a triacylglycerol + H2O = a diacylglycerol + a fatty acid + H(+). Displays cellular triglyceride lipase activity in liver, increases the levels of intracellular fatty acids derived from the hydrolysis of newly formed triglyceride stores and plays a role in very low-density lipoprotein assembly. Displays serine esterase activity in liver. Deacetylates a variety of arylacetamide substrates, including xenobiotic compounds and procarcinogens, converting them to the primary arylamide compounds and increasing their toxicity. The sequence is that of Arylacetamide deacetylase (Aadac) from Rattus norvegicus (Rat).